The sequence spans 121 residues: Small ribosomal subunit protein uS13 (121 aa).

Positions G94–K121 are disordered. Residues S106–K121 show a composition bias toward basic residues.

This sequence belongs to the universal ribosomal protein uS13 family. Part of the 30S ribosomal subunit. Forms a loose heterodimer with protein S19. Forms two bridges to the 50S subunit in the 70S ribosome.

Located at the top of the head of the 30S subunit, it contacts several helices of the 16S rRNA. In the 70S ribosome it contacts the 23S rRNA (bridge B1a) and protein L5 of the 50S subunit (bridge B1b), connecting the 2 subunits; these bridges are implicated in subunit movement. Contacts the tRNAs in the A and P-sites. The sequence is that of Small ribosomal subunit protein uS13 from Halalkalibacterium halodurans (strain ATCC BAA-125 / DSM 18197 / FERM 7344 / JCM 9153 / C-125) (Bacillus halodurans).